We begin with the raw amino-acid sequence, 1687 residues long: A-kinase anchor protein SPHKAP (1687 aa).

Residues 1 to 14 are compositionally biased toward polar residues; the sequence is MDVNSRLSVQSNVE. Disordered regions lie at residues 1–25 and 272–293; these read MDVN…PEPQ and RKHR…ENTS. Positions 914–931 are PKA-RII subunit binding domain; that stretch reads FAEELAETVVSMATEIAA. The tract at residues 964–989 is disordered; the sequence is LKRKKENSSAGSTVRKHKPPRLSEIK. A phosphoserine mark is found at S1010, S1070, S1092, S1105, S1106, S1109, S1244, and S1273. Disordered stretches follow at residues 1363–1406 and 1421–1520; these read VTEG…SPRR and DQKE…PDDT. Over residues 1366-1375 the composition is skewed to polar residues; that stretch reads GNHSPVSSPG. Over residues 1382-1393 the composition is skewed to basic and acidic residues; sequence KPSDFDPRRETS. A compositionally biased stretch (polar residues) spans 1461 to 1470; that stretch reads TAPSTCQSSR. Residues 1482–1494 show a composition bias toward basic and acidic residues; that stretch reads EVLKEDIPRDESR. Residues 1495–1508 show a composition bias toward low complexity; sequence NPPSSSEESTGSWS.

This sequence belongs to the AKAP110 family. As to quaternary structure, interacts (via the PKA-RII subunit binding domain) with the RI subunit of PKA. Interacts with SPHK1; the interaction greatly reduces SPHK1 activity.

The protein localises to the cytoplasm. Anchoring protein that binds preferentially to the type I regulatory subunit of c-AMP-dependent protein kinase (PKA type I) and targets it to distinct subcellular compartments. May act as a converging factor linking cAMP and sphingosine signaling pathways. Plays a regulatory role in the modulation of SPHK1. The sequence is that of A-kinase anchor protein SPHKAP (Sphkap) from Mus musculus (Mouse).